A 229-amino-acid chain; its full sequence is NAD(P)H-hydrate epimerase (229 aa).

One can recognise a YjeF N-terminal domain in the interval 10-217 (AINVDLELFN…ALQRKYELNL (208 aa)). 60–64 (NNGGD) serves as a coordination point for (6S)-NADPHX. 2 residues coordinate K(+): asparagine 61 and aspartate 125. (6S)-NADPHX contacts are provided by residues 129 to 135 (GFSFKPP) and aspartate 158. Serine 161 serves as a coordination point for K(+).

The protein belongs to the NnrE/AIBP family. Requires K(+) as cofactor.

The catalysed reaction is (6R)-NADHX = (6S)-NADHX. It catalyses the reaction (6R)-NADPHX = (6S)-NADPHX. Its function is as follows. Catalyzes the epimerization of the S- and R-forms of NAD(P)HX, a damaged form of NAD(P)H that is a result of enzymatic or heat-dependent hydration. This is a prerequisite for the S-specific NAD(P)H-hydrate dehydratase to allow the repair of both epimers of NAD(P)HX. This chain is NAD(P)H-hydrate epimerase, found in Drosophila virilis (Fruit fly).